The primary structure comprises 364 residues: Uroporphyrinogen decarboxylase (364 aa).

Substrate is bound by residues 28-32, D78, Y160, T215, and H333; that span reads RQAGR.

Belongs to the uroporphyrinogen decarboxylase family. In terms of assembly, homodimer.

It localises to the cytoplasm. The enzyme catalyses uroporphyrinogen III + 4 H(+) = coproporphyrinogen III + 4 CO2. It functions in the pathway porphyrin-containing compound metabolism; protoporphyrin-IX biosynthesis; coproporphyrinogen-III from 5-aminolevulinate: step 4/4. Its function is as follows. Catalyzes the decarboxylation of four acetate groups of uroporphyrinogen-III to yield coproporphyrinogen-III. This Burkholderia mallei (strain NCTC 10247) protein is Uroporphyrinogen decarboxylase.